A 172-amino-acid polypeptide reads, in one-letter code: 3-hydroxydecanoyl-[acyl-carrier-protein] dehydratase (172 aa).

H71 is a catalytic residue.

The protein belongs to the thioester dehydratase family. FabA subfamily. Homodimer.

Its subcellular location is the cytoplasm. The enzyme catalyses a (3R)-hydroxyacyl-[ACP] = a (2E)-enoyl-[ACP] + H2O. It carries out the reaction (3R)-hydroxydecanoyl-[ACP] = (2E)-decenoyl-[ACP] + H2O. The catalysed reaction is (2E)-decenoyl-[ACP] = (3Z)-decenoyl-[ACP]. It participates in lipid metabolism; fatty acid biosynthesis. In terms of biological role, necessary for the introduction of cis unsaturation into fatty acids. Catalyzes the dehydration of (3R)-3-hydroxydecanoyl-ACP to E-(2)-decenoyl-ACP and then its isomerization to Z-(3)-decenoyl-ACP. Can catalyze the dehydratase reaction for beta-hydroxyacyl-ACPs with saturated chain lengths up to 16:0, being most active on intermediate chain length. The polypeptide is 3-hydroxydecanoyl-[acyl-carrier-protein] dehydratase (Erwinia tasmaniensis (strain DSM 17950 / CFBP 7177 / CIP 109463 / NCPPB 4357 / Et1/99)).